Consider the following 264-residue polypeptide: Thymidylate synthase (264 aa).

A dUMP-binding site is contributed by arginine 21. Histidine 51 lines the (6R)-5,10-methylene-5,6,7,8-tetrahydrofolate pocket. The active-site Nucleophile is the cysteine 146. Residues 166–169 (RSAD), asparagine 177, and 207–209 (HIY) contribute to the dUMP site. Aspartate 169 lines the (6R)-5,10-methylene-5,6,7,8-tetrahydrofolate pocket. A (6R)-5,10-methylene-5,6,7,8-tetrahydrofolate-binding site is contributed by alanine 263.

Belongs to the thymidylate synthase family. Bacterial-type ThyA subfamily. In terms of assembly, homodimer.

The protein localises to the cytoplasm. The enzyme catalyses dUMP + (6R)-5,10-methylene-5,6,7,8-tetrahydrofolate = 7,8-dihydrofolate + dTMP. It participates in pyrimidine metabolism; dTTP biosynthesis. Functionally, catalyzes the reductive methylation of 2'-deoxyuridine-5'-monophosphate (dUMP) to 2'-deoxythymidine-5'-monophosphate (dTMP) while utilizing 5,10-methylenetetrahydrofolate (mTHF) as the methyl donor and reductant in the reaction, yielding dihydrofolate (DHF) as a by-product. This enzymatic reaction provides an intracellular de novo source of dTMP, an essential precursor for DNA biosynthesis. In Brucella canis (strain ATCC 23365 / NCTC 10854 / RM-666), this protein is Thymidylate synthase.